A 752-amino-acid polypeptide reads, in one-letter code: Polyribonucleotide nucleotidyltransferase (752 aa).

Mg(2+) is bound by residues aspartate 529 and aspartate 535. Residues 595-654 enclose the KH domain; sequence PRVTTIKVPVDKIGEVIGPKGKVINAITEETGAQISIEDDGTVFVGATDGPSAQAAIDKI. In terms of domain architecture, S1 motif spans 666–735; it reads GERFLGTVVK…KRGKISLILV (70 aa).

The protein belongs to the polyribonucleotide nucleotidyltransferase family. Mg(2+) serves as cofactor.

The protein resides in the cytoplasm. The enzyme catalyses RNA(n+1) + phosphate = RNA(n) + a ribonucleoside 5'-diphosphate. Functionally, involved in mRNA degradation. Catalyzes the phosphorolysis of single-stranded polyribonucleotides processively in the 3'- to 5'-direction. The chain is Polyribonucleotide nucleotidyltransferase from Mycobacterium tuberculosis (strain ATCC 25177 / H37Ra).